Reading from the N-terminus, the 1397-residue chain is DNA-directed RNA polymerase subunit beta (1397 aa).

The protein belongs to the RNA polymerase beta chain family. In terms of assembly, the RNAP catalytic core consists of 2 alpha, 1 beta, 1 beta' and 1 omega subunit. When a sigma factor is associated with the core the holoenzyme is formed, which can initiate transcription.

It carries out the reaction RNA(n) + a ribonucleoside 5'-triphosphate = RNA(n+1) + diphosphate. Its function is as follows. DNA-dependent RNA polymerase catalyzes the transcription of DNA into RNA using the four ribonucleoside triphosphates as substrates. In Rhodospirillum centenum (strain ATCC 51521 / SW), this protein is DNA-directed RNA polymerase subunit beta.